The sequence spans 219 residues: Charged multivesicular body protein 5 (219 aa).

Residues 1–10 show a composition bias toward basic residues; sequence MNRFFGKAKP. The segment at 1–21 is disordered; sequence MNRFFGKAKPKAPPPSLTDCI. Residues 26–179 are a coiled coil; that stretch reads SRAESIDKKI…LGDELLADED (154 aa). The residue at position 86 (Ser86) is a Phosphoserine. Residues 188–219 form a disordered region; that stretch reads SAPAIPEGVPTDTKNKDGVLVDEFGLPQIPAS.

Belongs to the SNF7 family. In terms of assembly, probable peripherally associated component of the endosomal sorting required for transport complex III (ESCRT-III). ESCRT-III components are thought to multimerize to form a flat lattice on the perimeter membrane of the endosome. Several assembly forms of ESCRT-III may exist that interact and act sequentially. Interacts with VTA1. Interacts with CHMP2A. Interacts with VTA1; the interaction involves soluble CHMP5. Interacts with NOD2. Interacts with BROX. ISGylated. Isgylation inhibits its interaction with VTA1.

The protein localises to the cytoplasm. Its subcellular location is the cytosol. It is found in the endosome membrane. The protein resides in the midbody. Probable peripherally associated component of the endosomal sorting required for transport complex III (ESCRT-III) which is involved in multivesicular bodies (MVBs) formation and sorting of endosomal cargo proteins into MVBs. MVBs contain intraluminal vesicles (ILVs) that are generated by invagination and scission from the limiting membrane of the endosome and mostly are delivered to lysosomes enabling degradation of membrane proteins, such as stimulated growth factor receptors, lysosomal enzymes and lipids. The MVB pathway appears to require the sequential function of ESCRT-O, -I,-II and -III complexes. ESCRT-III proteins mostly dissociate from the invaginating membrane before the ILV is released. The ESCRT machinery also functions in topologically equivalent membrane fission events, such as the terminal stages of cytokinesis. ESCRT-III proteins are believed to mediate the necessary vesicle extrusion and/or membrane fission activities, possibly in conjunction with the AAA ATPase VPS4. The chain is Charged multivesicular body protein 5 (Chmp5) from Mus musculus (Mouse).